The sequence spans 564 residues: Diacylglycerol kinase epsilon (564 aa).

The helical transmembrane segment at L20–L40 threads the bilayer. 2 consecutive Phorbol-ester/DAG-type zinc fingers follow at residues K57–C106 and P121–C174. A DAGKc domain is found at K212 to N353.

This sequence belongs to the eukaryotic diacylglycerol kinase family. In terms of tissue distribution, highly expressed in brain and heart. In brain, highly expressed in Purkinje cells of the cerebellum, pyramidal cells of the hippocampus, mitral cells of the olfactory bulb, and neurons of the substantia nigra. Lower expression in neurons of the thalamus, superior olive, and lateral reticular nucleus is also detected. Expressed in platelets.

It localises to the membrane. The protein resides in the cytoplasm. It carries out the reaction a 1,2-diacyl-sn-glycerol + ATP = a 1,2-diacyl-sn-glycero-3-phosphate + ADP + H(+). The catalysed reaction is 1-hexadecanoyl-2-(5Z,8Z,11Z,14Z-eicosatetraenoyl)-sn-glycerol + ATP = 1-hexadecanoyl-2-(5Z,8Z,11Z,14Z-eicosatetraenoyl)-sn-glycero-3-phosphate + ADP + H(+). The enzyme catalyses 1-octadecanoyl-2-(5Z,8Z,11Z,14Z-eicosatetraenoyl)-sn-glycerol + ATP = 1-octadecanoyl-2-(5Z,8Z,11Z,14Z-eicosatetraenoyl)-sn-glycero-3-phosphate + ADP + H(+). It catalyses the reaction 1-eicosanoyl-2-(5Z,8Z,11Z,14Z)-eicosatetraenoyl-sn-glycerol + ATP = 1-eicosanoyl-2-(5Z,8Z,11Z,14Z)-eicosatetraenoyl-sn-glycero-3-phosphate + ADP + H(+). It carries out the reaction 1,2-di-(5Z,8Z,11Z,14Z)-eicosatetraenoyl-sn-glycerol + ATP = 1,2-di-(5Z,8Z,11Z,14Z)-eicosatetraenoyl-sn-glycero-3-phosphate + ADP + H(+). The catalysed reaction is 1-octadecanoyl-2-(9Z,12Z)-octadecadienoyl-sn-glycerol + ATP = 1-octadecanoyl-2-(9Z,12Z-octadecadienoyl)-sn-glycero-3-phosphate + ADP + H(+). The enzyme catalyses 1,2-di-(9Z,12Z-octadecadienoyl)-sn-glycerol + ATP = 1,2-di-(9Z,12Z-octadecadienoyl)-sn-glycero-3-phosphate + ADP + H(+). It catalyses the reaction 1,2-di-(9Z-octadecenoyl)-sn-glycerol + ATP = 1,2-di-(9Z-octadecenoyl)-sn-glycero-3-phosphate + ADP + H(+). It functions in the pathway lipid metabolism; glycerolipid metabolism. In terms of biological role, membrane-bound diacylglycerol kinase that converts diacylglycerol/DAG into phosphatidic acid/phosphatidate/PA and regulates the respective levels of these two bioactive lipids. Thereby, acts as a central switch between the signaling pathways activated by these second messengers with different cellular targets and opposite effects in numerous biological processes. Also plays an important role in the biosynthesis of complex lipids. Displays specificity for diacylglycerol substrates with an arachidonoyl acyl chain at the sn-2 position, with the highest activity toward 1-octadecanoyl-2-(5Z,8Z,11Z,14Z-eicosatetraenoyl)-sn-glycerol the main diacylglycerol intermediate within the phosphatidylinositol turnover cycle. Can also phosphorylate diacylglycerol substrates with a linoleoyl acyl chain at the sn-2 position but much less efficiently. The polypeptide is Diacylglycerol kinase epsilon (Dgke) (Mus musculus (Mouse)).